A 445-amino-acid polypeptide reads, in one-letter code: Putative serpin-Z5 (445 aa).

An RCL region spans residues G356–P380.

This sequence belongs to the serpin family.

Its function is as follows. Probable serine protease inhibitor. The protein is Putative serpin-Z5 of Oryza sativa subsp. japonica (Rice).